The primary structure comprises 220 residues: Probable nicotinate-nucleotide adenylyltransferase (220 aa).

It belongs to the NadD family.

The enzyme catalyses nicotinate beta-D-ribonucleotide + ATP + H(+) = deamido-NAD(+) + diphosphate. It participates in cofactor biosynthesis; NAD(+) biosynthesis; deamido-NAD(+) from nicotinate D-ribonucleotide: step 1/1. Catalyzes the reversible adenylation of nicotinate mononucleotide (NaMN) to nicotinic acid adenine dinucleotide (NaAD). In Serratia proteamaculans (strain 568), this protein is Probable nicotinate-nucleotide adenylyltransferase.